Reading from the N-terminus, the 500-residue chain is Cytochrome P450 monooxygenase astJ (500 aa).

C440 contacts heme.

This sequence belongs to the cytochrome P450 family. Heme serves as cofactor.

It functions in the pathway secondary metabolite biosynthesis; terpenoid biosynthesis. Its function is as follows. Cytochrome P450 monooxygenase; part of the gene cluster that mediates the biosynthesis of astellolides, drimane-type sesquiterpene esters that show antimicrobial, anti-inflammatory, and anti-tumor activities. The first step in astellolide biosynthesis is performed by the sesquiterpene cyclase astC that catalyzes the formation of drimanyl pyrophosphate from farnesyl pyrophosphate. Drimanyl pyrophosphate is then dephosphorylated by the sesquiterpene phosphatase astI to produce drimanyl monophosphate which is further dephosphorylated to drim-8-ene-11-ol by atsK. Drim-8-ene-11-ol is converted to confertifolin, probably by the cytochrome P450 monooxygenase astD and/or the dehydrogenase astE. The cytochrome P450 monooxygenases astB, astF and astJ then hydroxylate confertifolin at C6, C14, or C15 to form trihydroxy confertifolin. The nonribosomal peptide synthetase astA catalyzes ester bond formation between trihydroxy contifolin and benzoic acid (BA) or 4-hydroxy benzoic acid (4HBA), leading to the formation of dideacetyl astellolides A and B, respectively. Finally, the O-acetyltransferase astG converts dideacetyl astellolides A and B into deacetyl astellolides A and B. This is Cytochrome P450 monooxygenase astJ from Aspergillus oryzae (strain ATCC 42149 / RIB 40) (Yellow koji mold).